Reading from the N-terminus, the 31-residue chain is Conotoxin Cltx-2 (31 aa).

4-hydroxyproline occurs at positions 6 and 31.

In terms of processing, contains 4 disulfide bonds. Expressed by the venom duct.

It localises to the secreted. The protein is Conotoxin Cltx-2 of Californiconus californicus (California cone).